The following is a 131-amino-acid chain: Phosphoribosyl-AMP cyclohydrolase (131 aa).

Mg(2+) is bound at residue Asp-78. Residue Cys-79 coordinates Zn(2+). Mg(2+) is bound by residues Asp-80 and Asp-82. Zn(2+) is bound by residues Cys-96 and Cys-103.

This sequence belongs to the PRA-CH family. As to quaternary structure, homodimer. Mg(2+) serves as cofactor. Requires Zn(2+) as cofactor.

The protein resides in the cytoplasm. The catalysed reaction is 1-(5-phospho-beta-D-ribosyl)-5'-AMP + H2O = 1-(5-phospho-beta-D-ribosyl)-5-[(5-phospho-beta-D-ribosylamino)methylideneamino]imidazole-4-carboxamide. It functions in the pathway amino-acid biosynthesis; L-histidine biosynthesis; L-histidine from 5-phospho-alpha-D-ribose 1-diphosphate: step 3/9. Functionally, catalyzes the hydrolysis of the adenine ring of phosphoribosyl-AMP. The protein is Phosphoribosyl-AMP cyclohydrolase of Thioalkalivibrio sulfidiphilus (strain HL-EbGR7).